The chain runs to 513 residues: ATP synthase subunit alpha (513 aa).

ATP is bound at residue 170 to 177; sequence GDRQTGKT.

The protein belongs to the ATPase alpha/beta chains family. F-type ATPases have 2 components, CF(1) - the catalytic core - and CF(0) - the membrane proton channel. CF(1) has five subunits: alpha(3), beta(3), gamma(1), delta(1), epsilon(1). CF(0) has four main subunits: a(1), b(1), b'(1) and c(9-12).

It localises to the cell inner membrane. It catalyses the reaction ATP + H2O + 4 H(+)(in) = ADP + phosphate + 5 H(+)(out). Its function is as follows. Produces ATP from ADP in the presence of a proton gradient across the membrane. The alpha chain is a regulatory subunit. In Gloeobacter violaceus (strain ATCC 29082 / PCC 7421), this protein is ATP synthase subunit alpha.